The following is a 66-amino-acid chain: uncharacterized protein (66 aa).

Residues Met1 to Asn25 form the signal peptide. Polar residues predominate over residues Gln21–Ala31. Residues Gln21–Asp66 are disordered.

This is an uncharacterized protein from Bacillus subtilis (strain 168).